A 305-amino-acid chain; its full sequence is tRNA dimethylallyltransferase (305 aa).

11 to 18 (GPTAVGKT) is an ATP binding site. 13 to 18 (TAVGKT) is a substrate binding site. The tract at residues 36 to 39 (DSMQ) is interaction with substrate tRNA.

The protein belongs to the IPP transferase family. As to quaternary structure, monomer. Requires Mg(2+) as cofactor.

The enzyme catalyses adenosine(37) in tRNA + dimethylallyl diphosphate = N(6)-dimethylallyladenosine(37) in tRNA + diphosphate. In terms of biological role, catalyzes the transfer of a dimethylallyl group onto the adenine at position 37 in tRNAs that read codons beginning with uridine, leading to the formation of N6-(dimethylallyl)adenosine (i(6)A). In Listeria monocytogenes serovar 1/2a (strain ATCC BAA-679 / EGD-e), this protein is tRNA dimethylallyltransferase.